We begin with the raw amino-acid sequence, 463 residues long: MENSLKSSGKPPAAPKVGMVSLGCPKALVDSEQIITQLRAEGYEISGTYDGADLVVVNTCGFIDEAVQESLDAIGEALAENGKVIVTGCLGAKKSASGSGLIEEVHPKVLAVTGPHAVGEVMQVVHSHLPKPHDPFVDLVPAAGIKLTPRHYAYLKISEGCNHRCSFCIIPSMRGDLVSRPVAEVMLEAENLFKAGVKELLVISQDTSAYGVDVKYRTGFWNGRPLKTRMTELVGALGELAAQYGAWVRLHYVYPYPHVDEIIPMMAQGPLKGHVLPYLDVPFQHAHPDVLKRMKRPANAEKVLERVQRWREICPDLTIRSTFIAGFPGETEAQFETLLDFIREAELDRVGCFAYSPVEGASANELDGALPDDVREARRARFMEVAEEVSAARIERKVGKTLKVLIDEVNEEGGIGRTAADAPEIDGVVYVEPAAKASKRYKVGDFVSVKITGADGHDLWGEV.

Positions 15-130 (PKVGMVSLGC…VMQVVHSHLP (116 aa)) constitute an MTTase N-terminal domain. 6 residues coordinate [4Fe-4S] cluster: C24, C60, C89, C161, C165, and C168. Residues 147–392 (LTPRHYAYLK…MEVAEEVSAA (246 aa)) form the Radical SAM core domain. In terms of domain architecture, TRAM spans 395–463 (ERKVGKTLKV…ADGHDLWGEV (69 aa)).

Belongs to the methylthiotransferase family. RimO subfamily. It depends on [4Fe-4S] cluster as a cofactor.

It localises to the cytoplasm. The catalysed reaction is L-aspartate(89)-[ribosomal protein uS12]-hydrogen + (sulfur carrier)-SH + AH2 + 2 S-adenosyl-L-methionine = 3-methylsulfanyl-L-aspartate(89)-[ribosomal protein uS12]-hydrogen + (sulfur carrier)-H + 5'-deoxyadenosine + L-methionine + A + S-adenosyl-L-homocysteine + 2 H(+). Its function is as follows. Catalyzes the methylthiolation of an aspartic acid residue of ribosomal protein uS12. This Burkholderia thailandensis (strain ATCC 700388 / DSM 13276 / CCUG 48851 / CIP 106301 / E264) protein is Ribosomal protein uS12 methylthiotransferase RimO.